We begin with the raw amino-acid sequence, 113 residues long: Large ribosomal subunit protein P2 (113 aa).

A disordered region spans residues 66-113 (PVGGGGAVAAADAAPAAAAGGDKKEAKKEEKKEESESEDDDMGFALFE). The segment covering 73–85 (VAAADAAPAAAAG) has biased composition (low complexity). Residues 86-99 (GDKKEAKKEEKKEE) are compositionally biased toward basic and acidic residues. Phosphoserine occurs at positions 100 and 102.

Belongs to the eukaryotic ribosomal protein P1/P2 family. As to quaternary structure, P1 and P2 exist as dimers at the large ribosomal subunit.

Its function is as follows. Plays an important role in the elongation step of protein synthesis. The protein is Large ribosomal subunit protein P2 (RpLP2) of Drosophila melanogaster (Fruit fly).